We begin with the raw amino-acid sequence, 229 residues long: MIDHTHLRLFQFCDSQFPTGAFSHSFGLETYIQRNIIHDDHTFIAWLKMFLQEQLTYSDGLAMRLVYDALENDDTQKVLHIDKLMFVQNLPKETRVGAKQMGTRIVKLALELYNSPWIAWYHQQMQDKKAKLNPAICFTMLGHYLGVDIETIIDYYLYQNVSSLTQNAVRAIPLGQTAGQKIVTHMIPYIEETRKQIFELKEADFGMTAPGLELNQMAHENVNVRIFIS.

The protein belongs to the UreF family. As to quaternary structure, ureD, UreF and UreG form a complex that acts as a GTP-hydrolysis-dependent molecular chaperone, activating the urease apoprotein by helping to assemble the nickel containing metallocenter of UreC. The UreE protein probably delivers the nickel.

The protein resides in the cytoplasm. Functionally, required for maturation of urease via the functional incorporation of the urease nickel metallocenter. This Staphylococcus aureus (strain bovine RF122 / ET3-1) protein is Urease accessory protein UreF.